Here is a 718-residue protein sequence, read N- to C-terminus: K(+)-insensitive pyrophosphate-energized proton pump (718 aa).

6 helical membrane passes run 6–26 (AVLV…IWAI), 54–76 (LTRQ…WYLL), 81–103 (AIGF…HVSV), 112–132 (AASL…AITG), 133–153 (LLVA…LTVW), and 168–188 (VSLG…GGIF). Lysine 190 contributes to the substrate binding site. 4 residues coordinate Mg(2+): aspartate 193, aspartate 197, asparagine 220, and aspartate 223. Helical transmembrane passes span 240–260 (AVTV…SDIL), 265–285 (LYPL…TFFV), 300–320 (GLIA…TLTV), 335–355 (GTNL…IVVI), 385–405 (GLAV…GGII), and 413–433 (LFGT…IVAL). Aspartate 441 is a binding site for Mg(2+). 4 consecutive transmembrane segments (helical) span residues 472–492 (AVTK…LFAA), 524–544 (YVVA…GMAM), 593–613 (IIPS…VLLI), and 620–640 (AFAA…FVAI). Ca(2+) is bound by residues aspartate 650, aspartate 682, and aspartate 686. Residue lysine 689 participates in substrate binding. The helical transmembrane segment at 695 to 715 (AVNPAIKITNIVALLLLAVLA) threads the bilayer.

The protein belongs to the H(+)-translocating pyrophosphatase (TC 3.A.10) family. K(+)-insensitive subfamily. Homodimer. Requires Mg(2+) as cofactor.

It is found in the cell inner membrane. It carries out the reaction diphosphate + H2O + H(+)(in) = 2 phosphate + 2 H(+)(out). Its function is as follows. Proton pump that utilizes the energy of pyrophosphate hydrolysis as the driving force for proton movement across the membrane. Generates a proton motive force. The sequence is that of K(+)-insensitive pyrophosphate-energized proton pump from Brucella anthropi (strain ATCC 49188 / DSM 6882 / CCUG 24695 / JCM 21032 / LMG 3331 / NBRC 15819 / NCTC 12168 / Alc 37) (Ochrobactrum anthropi).